A 566-amino-acid chain; its full sequence is 4-coumarate--CoA ligase-like 6 (566 aa).

The interval 1–21 (MAATHLHIPPNPKTQTSHQNP) is disordered. Positions 212, 213, 214, 215, 216, and 220 each coordinate ATP. Y263 provides a ligand contact to (E)-4-coumaroyl-AMP. R284 contacts CoA. The SBD1 stretch occupies residues 286–356 (DASDVVNVIE…QTLPHVDLIQ (71 aa)). (E)-4-coumaroyl-AMP is bound by residues A334, Q356, G357, and T361. Residues Q356, G357, T361, D442, and R457 each contribute to the ATP site. The segment at 357-421 (GYGMTESTAV…IQGPGVMKGY (65 aa)) is SBD2. Positions 459 and 463 each coordinate (E)-4-coumaroyl-AMP. Residues K465 and G466 each coordinate CoA. Residue K548 coordinates ATP. The Microbody targeting signal motif lies at 564–566 (SRL).

The protein belongs to the ATP-dependent AMP-binding enzyme family. It depends on Mg(2+) as a cofactor. Expressed at very low level in leaves.

It is found in the peroxisome. It carries out the reaction (E)-4-coumarate + ATP + CoA = (E)-4-coumaroyl-CoA + AMP + diphosphate. The catalysed reaction is (E)-4-coumarate + ATP + H(+) = (E)-4-coumaroyl-AMP + diphosphate. It catalyses the reaction (E)-4-coumaroyl-AMP + CoA = (E)-4-coumaroyl-CoA + AMP + H(+). The enzyme catalyses (E)-ferulate + ATP + CoA = (E)-feruloyl-CoA + AMP + diphosphate. It carries out the reaction (E)-ferulate + ATP + H(+) = (E)-feruloyl-AMP + diphosphate. The catalysed reaction is (E)-feruloyl-AMP + CoA = (E)-feruloyl-CoA + AMP + H(+). It catalyses the reaction (E)-caffeate + ATP + CoA = (E)-caffeoyl-CoA + AMP + diphosphate. The enzyme catalyses (E)-caffeate + ATP + H(+) = (E)-caffeoyl-AMP + diphosphate. It carries out the reaction (E)-caffeoyl-AMP + CoA = (E)-caffeoyl-CoA + AMP + H(+). The catalysed reaction is (E)-cinnamate + ATP + CoA = (E)-cinnamoyl-CoA + AMP + diphosphate. It catalyses the reaction 4-hydroxybenzoate + ATP + CoA = 4-hydroxybenzoyl-CoA + AMP + diphosphate. The enzyme catalyses tetradecanoate + ATP + CoA = tetradecanoyl-CoA + AMP + diphosphate. It carries out the reaction hexanoate + ATP + CoA = hexanoyl-CoA + AMP + diphosphate. The catalysed reaction is heptanoate + ATP + CoA = heptanoyl-CoA + AMP + diphosphate. In terms of biological role, contributes to jasmonic acid biosynthesis by initiating the beta-oxidative chain shortening of its precursors. Acts as a carboxylate--CoA ligase that can use preferentially p-coumarate, ferulate and caffeate as substrates and, with a lower efficiency, (E)-cinnamate and 4-hydroxybenzoate as substrates. Involved in the biosynthesis of ubiquinone from phenylalanine by activating the propyl side chain of 4-coumarate, and possibly trans-cinnamate and 4-hydroxybenzoate, for subsequent beta-oxidative shortening and the formation of the benzenoid moiety of ubiquinone. Follows a two-step reaction mechanism, wherein the carboxylate substrate first undergoes adenylation by ATP, followed by a thioesterification in the presence of CoA to yield the final CoA thioester. The chain is 4-coumarate--CoA ligase-like 6 from Arabidopsis thaliana (Mouse-ear cress).